A 374-amino-acid polypeptide reads, in one-letter code: WAT1-related protein At1g60050 (374 aa).

The next 10 membrane-spanning stretches (helical) occupy residues 11 to 31, 42 to 62, 82 to 102, 107 to 127, 145 to 165, 194 to 214, 228 to 248, 255 to 275, 292 to 312, and 315 to 335; these read IVPFIVMALMEACTIALTILA, FVFIVYTNALGSLLLLPYSFY, IFLLGFTGVFLFQNMAFLGLS, IVVCAMGLQSPAFSFLLSLAL, IGTLICFTGAFVEVIYLGPFI, WALGSLLLACATLSISIWNII, VVSAYSLAGTLQCAIFSAFME, ELKLNMDLYLIIATGIFGSII, VPLFKPFGILWASIFGTSFFV, and LHYGSVLGAAIAGTGYLLIMW. The region spanning 26–155 is the EamA domain; sequence ALTILAKTAL…GTLICFTGAF (130 aa).

Belongs to the drug/metabolite transporter (DMT) superfamily. Plant drug/metabolite exporter (P-DME) (TC 2.A.7.4) family.

Its subcellular location is the membrane. The protein is WAT1-related protein At1g60050 of Arabidopsis thaliana (Mouse-ear cress).